Reading from the N-terminus, the 218-residue chain is Large ribosomal subunit protein uL3 (218 aa).

Residues 126–169 form a disordered region; it reads HGFSRGPMTHGSKNHRQPGSIGAGTTPGRIYPGKRMSGRYGGKK.

Belongs to the universal ribosomal protein uL3 family. In terms of assembly, part of the 50S ribosomal subunit. Forms a cluster with proteins L14 and L19.

Functionally, one of the primary rRNA binding proteins, it binds directly near the 3'-end of the 23S rRNA, where it nucleates assembly of the 50S subunit. The chain is Large ribosomal subunit protein uL3 from Synechococcus sp. (strain CC9902).